Consider the following 415-residue polypeptide: Gamma-glutamyl phosphate reductase (415 aa).

It belongs to the gamma-glutamyl phosphate reductase family.

The protein localises to the cytoplasm. It carries out the reaction L-glutamate 5-semialdehyde + phosphate + NADP(+) = L-glutamyl 5-phosphate + NADPH + H(+). It participates in amino-acid biosynthesis; L-proline biosynthesis; L-glutamate 5-semialdehyde from L-glutamate: step 2/2. Its function is as follows. Catalyzes the NADPH-dependent reduction of L-glutamate 5-phosphate into L-glutamate 5-semialdehyde and phosphate. The product spontaneously undergoes cyclization to form 1-pyrroline-5-carboxylate. In Bacillus cereus (strain B4264), this protein is Gamma-glutamyl phosphate reductase.